A 396-amino-acid chain; its full sequence is Elongation factor Tu (396 aa).

Residues 10–206 form the tr-type G domain; the sequence is KPHCNIGTIG…AVDAYIPQPE (197 aa). The segment at 19 to 26 is G1; sequence GHVDHGKT. GTP is bound at residue 19–26; that stretch reads GHVDHGKT. Mg(2+) is bound at residue T26. A G2 region spans residues 60–64; sequence GITIS. Positions 81-84 are G3; that stretch reads DCPG. GTP is bound by residues 81 to 85 and 136 to 139; these read DCPGH and NKCD. The interval 136 to 139 is G4; it reads NKCD. A G5 region spans residues 174 to 176; it reads SAL.

It belongs to the TRAFAC class translation factor GTPase superfamily. Classic translation factor GTPase family. EF-Tu/EF-1A subfamily. In terms of assembly, monomer.

The protein localises to the cytoplasm. It catalyses the reaction GTP + H2O = GDP + phosphate + H(+). GTP hydrolase that promotes the GTP-dependent binding of aminoacyl-tRNA to the A-site of ribosomes during protein biosynthesis. The sequence is that of Elongation factor Tu from Nitrobacter winogradskyi (strain ATCC 25391 / DSM 10237 / CIP 104748 / NCIMB 11846 / Nb-255).